We begin with the raw amino-acid sequence, 161 residues long: Multiprotein-bridging factor 1 (161 aa).

The tract at residues 1 to 66 is disordered; sequence MADDWDTVTK…RSEAGSGQFL (66 aa). Positions 14 to 23 are enriched in gly residues; that stretch reads RVGGGGGGGP. 2 stretches are compositionally biased toward polar residues: residues 27–36 and 52–65; these read TIKNKSQLNA and TANSSRSEAGSGQF. One can recognise an HTH cro/C1-type domain in the interval 90–144; that stretch reads MQNREQKKLGNRLEFGKKVGINEKDLARIEKGEVPITQDQVNRIERGLEMFIRGV. The H-T-H motif DNA-binding region spans 101–120; sequence RLEFGKKVGINEKDLARIEK.

It belongs to the MBF1 family.

Transcriptional coactivator that stimulates GCN4-dependent transcriptional activity by bridging the DNA-binding region of GCN4 and TBP (SPT15), thereby recruiting TBP to GCN4-bound promoters. Involved in induction of the ribosome quality control (RQC) pathway; a pathway that degrades nascent peptide chains during problematic translation. Required to prevent stalled ribosomes from frameshifting. In Pyricularia oryzae (strain 70-15 / ATCC MYA-4617 / FGSC 8958) (Rice blast fungus), this protein is Multiprotein-bridging factor 1 (MBF1).